A 165-amino-acid chain; its full sequence is Peptide methionine sulfoxide reductase MsrA (165 aa).

Cys10 is an active-site residue.

This sequence belongs to the MsrA Met sulfoxide reductase family.

It catalyses the reaction L-methionyl-[protein] + [thioredoxin]-disulfide + H2O = L-methionyl-(S)-S-oxide-[protein] + [thioredoxin]-dithiol. The catalysed reaction is [thioredoxin]-disulfide + L-methionine + H2O = L-methionine (S)-S-oxide + [thioredoxin]-dithiol. In terms of biological role, has an important function as a repair enzyme for proteins that have been inactivated by oxidation. Catalyzes the reversible oxidation-reduction of methionine sulfoxide in proteins to methionine. The sequence is that of Peptide methionine sulfoxide reductase MsrA from Campylobacter jejuni (strain RM1221).